The chain runs to 321 residues: Tet-like dioxygenase 1 (321 aa).

The region spanning 198 to 298 (DSYYALNNCL…RIGLVYFAHK (101 aa)) is the Fe2OG dioxygenase domain. Asn214 and Arg224 together coordinate 2-oxoglutarate. Fe cation-binding residues include His229 and Asp231. 2-oxoglutarate is bound at residue Tyr242. A Fe cation-binding site is contributed by His279. Arg289 lines the 2-oxoglutarate pocket. Gln310 contributes to the substrate binding site.

Requires Fe(2+) as cofactor.

It catalyses the reaction a 5-methyl-2'-deoxycytidine in DNA + 2-oxoglutarate + O2 = a 5-hydroxymethyl-2'-deoxycytidine in DNA + succinate + CO2. The catalysed reaction is a 5-hydroxymethyl-2'-deoxycytidine in DNA + 2-oxoglutarate + O2 = a 5-formyl-2'-deoxycytidine in DNA + succinate + CO2 + H2O. The enzyme catalyses a 5-formyl-2'-deoxycytidine in DNA + 2-oxoglutarate + O2 = a 5-carboxyl-2'-deoxycytidine in DNA + succinate + CO2 + H(+). Functionally, dioxygenase that catalyzes the conversion of the modified genomic base 5-methylcytosine (5mC) into 5-hydroxymethylcytosine (5hmC), and thereby plays a role in active DNA demethylation. Also mediates subsequent conversion of 5hmC into 5-formylcytosine (5fC), and conversion of 5fC to 5-carboxylcytosine (5caC). In Naegleria gruberi (Amoeba), this protein is Tet-like dioxygenase 1.